A 154-amino-acid polypeptide reads, in one-letter code: Large ribosomal subunit protein uL13 (154 aa).

It belongs to the universal ribosomal protein uL13 family. As to quaternary structure, part of the 50S ribosomal subunit.

Its function is as follows. This protein is one of the early assembly proteins of the 50S ribosomal subunit, although it is not seen to bind rRNA by itself. It is important during the early stages of 50S assembly. The sequence is that of Large ribosomal subunit protein uL13 from Rhodopseudomonas palustris (strain BisB18).